Consider the following 86-residue polypeptide: MRATAIVLLLALTLATMFSIECAKQTKQMVDCSHYKKLPPGQQRFCHHMYDPICGSDGKTYKNDCFFCSKVKKTDGTLKFVHFGKC.

An N-terminal signal peptide occupies residues 1 to 19 (MRATAIVLLLALTLATMFS). Residues 26–86 (TKQMVDCSHY…TLKFVHFGKC (61 aa)) enclose the Kazal-like domain. Disulfide bonds link C32–C68, C46–C65, and C54–C86.

In terms of assembly, dimer. Interacts with KLK5 and KLK8. In terms of tissue distribution, skin. Highly expressed at sites of hyperkeratosis. Also detected in thymus, tonsils, testis, pancreas, liver, placenta and brain. Expressed at stratum granulosum and stratum corneum at palmar and plantar sites (at protein level).

The protein localises to the secreted. Functionally, serine protease inhibitor which specifically inhibits KLK5. May contribute to the regulation of the desquamation process in skin by inhibiting KLK5. This chain is Serine protease inhibitor Kazal-type 9 (SPINK9), found in Homo sapiens (Human).